Reading from the N-terminus, the 242-residue chain is Biosynthetic peptidoglycan transglycosylase (242 aa).

The chain crosses the membrane as a helical span at residues 19–39 (ILAALAVFWGGGIALFSVVPV).

The protein belongs to the glycosyltransferase 51 family.

The protein resides in the cell inner membrane. It catalyses the reaction [GlcNAc-(1-&gt;4)-Mur2Ac(oyl-L-Ala-gamma-D-Glu-L-Lys-D-Ala-D-Ala)](n)-di-trans,octa-cis-undecaprenyl diphosphate + beta-D-GlcNAc-(1-&gt;4)-Mur2Ac(oyl-L-Ala-gamma-D-Glu-L-Lys-D-Ala-D-Ala)-di-trans,octa-cis-undecaprenyl diphosphate = [GlcNAc-(1-&gt;4)-Mur2Ac(oyl-L-Ala-gamma-D-Glu-L-Lys-D-Ala-D-Ala)](n+1)-di-trans,octa-cis-undecaprenyl diphosphate + di-trans,octa-cis-undecaprenyl diphosphate + H(+). It participates in cell wall biogenesis; peptidoglycan biosynthesis. Its function is as follows. Peptidoglycan polymerase that catalyzes glycan chain elongation from lipid-linked precursors. The polypeptide is Biosynthetic peptidoglycan transglycosylase (Salmonella paratyphi A (strain ATCC 9150 / SARB42)).